The primary structure comprises 116 residues: NADPH-dependent 7-cyano-7-deazaguanine reductase (116 aa).

The Thioimide intermediate role is filled by C31. D38 (proton donor) is an active-site residue. Residues I53–L55 and Y72–E73 each bind substrate.

This sequence belongs to the GTP cyclohydrolase I family. QueF type 1 subfamily.

It is found in the cytoplasm. The catalysed reaction is 7-aminomethyl-7-carbaguanine + 2 NADP(+) = 7-cyano-7-deazaguanine + 2 NADPH + 3 H(+). It participates in tRNA modification; tRNA-queuosine biosynthesis. Functionally, catalyzes the NADPH-dependent reduction of 7-cyano-7-deazaguanine (preQ0) to 7-aminomethyl-7-deazaguanine (preQ1). The chain is NADPH-dependent 7-cyano-7-deazaguanine reductase from Chlorobaculum parvum (strain DSM 263 / NCIMB 8327) (Chlorobium vibrioforme subsp. thiosulfatophilum).